The chain runs to 165 residues: Ribosome maturation factor RimM (165 aa).

Residues 94–163 (EDEFYIADLN…KDYVTLNYQR (70 aa)) enclose the PRC barrel domain.

This sequence belongs to the RimM family. In terms of assembly, binds ribosomal protein uS19.

Its subcellular location is the cytoplasm. Its function is as follows. An accessory protein needed during the final step in the assembly of 30S ribosomal subunit, possibly for assembly of the head region. Essential for efficient processing of 16S rRNA. May be needed both before and after RbfA during the maturation of 16S rRNA. It has affinity for free ribosomal 30S subunits but not for 70S ribosomes. This Rickettsia akari (strain Hartford) protein is Ribosome maturation factor RimM.